The sequence spans 119 residues: MPRVKGGTVTRKRRKKIVKLAKGYYGSKHLLFKVANQAVMKSYQYAYRDRRQKKRDFRRLWIARINAAARMQDLSYSKLMHGLKLAGIDINRKMLADLAVNDIASFNTLADSAKKALAK.

This sequence belongs to the bacterial ribosomal protein bL20 family.

Functionally, binds directly to 23S ribosomal RNA and is necessary for the in vitro assembly process of the 50S ribosomal subunit. It is not involved in the protein synthesizing functions of that subunit. This Listeria innocua serovar 6a (strain ATCC BAA-680 / CLIP 11262) protein is Large ribosomal subunit protein bL20.